The chain runs to 319 residues: Melanoma-associated antigen B2 (319 aa).

Over residues 1–17 (MPRGQKSKLRAREKRRK) the composition is skewed to basic residues. The segment at 1-112 (MPRGQKSKLR…TKSPSEDPLT (112 aa)) is disordered. Composition is skewed to low complexity over residues 39–57 (PCCSSSVSGGAASSSPAAG), 67–79 (TTAAAAAAGVSST), and 94–105 (ASSSQASTSTKS). A phosphoserine mark is found at Ser-77 and Ser-105. The 200-residue stretch at 111 to 310 (LTRKSGSLVQ…CAFPTHYEEA (200 aa)) folds into the MAGE domain.

In terms of assembly, interacts with TRIM28. In terms of tissue distribution, expressed in testis and placenta, and in a significant fraction of tumors of various histologic types.

In terms of biological role, may enhance ubiquitin ligase activity of RING-type zinc finger-containing E3 ubiquitin-protein ligases. Proposed to act through recruitment and/or stabilization of the Ubl-conjugating enzyme (E2) at the E3:substrate complex. In Homo sapiens (Human), this protein is Melanoma-associated antigen B2 (MAGEB2).